Here is a 1067-residue protein sequence, read N- to C-terminus: Kinesin-like protein KIF11 (1067 aa).

One can recognise a Kinesin motor domain in the interval 18 to 359 (NIQVVVRCRP…LEYANRAKNI (342 aa)). Position 105-112 (105-112 (GQTGTGKT)) interacts with ATP. Positions 365-480 (VNQKLTKRAL…SKEQLAQEAF (116 aa)) form a coiled coil. Threonine 937 bears the Phosphothreonine; by CDK1 mark. Residue serine 1046 is modified to Phosphoserine; by NEK6. The tract at residues 1048-1067 (IMDEAEQSLPKSKLPLRMQN) is disordered.

It belongs to the TRAFAC class myosin-kinesin ATPase superfamily. Kinesin family. BimC subfamily. Heterotetramer of two heavy and two light chains. Interacts with aurka. Phosphorylation of Thr-937 during mitosis controls the association of this protein with the spindle apparatus. In terms of processing, a subset of this protein primarily localized at the spindle pole is phosphorylated by NEK6 during mitosis. Post-translationally, phosphorylated on a serine residue by aurka.

Its subcellular location is the cytoplasm. It localises to the cytoskeleton. The protein resides in the spindle pole. Functionally, plus end-directed motor protein required for establishing a bipolar spindle. Associates with both interphase and mitotic spindle microtubules. May be involved in nuclear divisions taking place during the development of unfertilized eggs. Required in non-mitotic cells for transport of secretory proteins from the Golgi complex to the cell surface. The polypeptide is Kinesin-like protein KIF11 (Xenopus tropicalis (Western clawed frog)).